Here is a 395-residue protein sequence, read N- to C-terminus: WW domain-containing transcription regulator protein 1 (395 aa).

A Glycyl lysine isopeptide (Lys-Gly) (interchain with G-Cter in ubiquitin) cross-link involves residue Lys46. The disordered stretch occupies residues 52 to 116 (FFKEPDSGSH…AQQHAHLRQQ (65 aa)). The span at 61–70 (HSRQSSTDSS) shows a compositional bias: polar residues. Position 62 is a phosphoserine (Ser62). Ser89 carries the post-translational modification Phosphoserine; by LATS2. Residues 124–157 (LPLPPGWEMTFTATGQRYFLNHIEKITTWQDPRK) enclose the WW domain. The interval 221 to 395 (PNALTTQQQQ…NKSEPFLTWL (175 aa)) is required for interaction with PALS1. Positions 224-258 (LTTQQQQQQKLRLQRIQMERERIRMRQEELMRQEA) form a coiled coil. A compositionally biased stretch (polar residues) spans 277–293 (PAMSTDMRSVTNSSSDP). The disordered stretch occupies residues 277 to 308 (PAMSTDMRSVTNSSSDPFLNGGPYHSREQSTD). Residue Ser290 is modified to Phosphoserine. Position 306 is a phosphoserine; by LATS2 (Ser306). The PDZ-binding signature appears at 389-395 (EPFLTWL).

Binds to SLC9A3R2 via the PDZ motif at the plasma membrane. Binds to YWHAZ in vivo and in vitro through the phosphoserine-binding motif RSHSSP. Interacts (via coiled-coil domain) with SMAD2 (via MH1 domain), SMAD3 and SMAD4. Interacts with MED15. Interacts with PAX8 and NKX2-1. Interacts with TEAD1, TEAD2, TEAD3 and TEAD4. Interacts (via WW domain) with PALS1. Interacts with LATS1. Interacts with YAP1 (when phosphorylated at 'Ser-112'). Interacts (via WW domain) with PRRG4 (via cytoplasmic domain). Interacts (via WW domain) with AMOTL2 (via PPXY motif); the interaction promotes WWTR1/TAZ localization to the cytoplasm and tight junctions, thereby inhibiting its transcriptional coactivator properties. Interacts (via WW domain) with AMOT; the interaction facilitates translocation of WWTR1/TAZ to the cytoplasm. Post-translationally, phosphorylated by LATS2 and STK3/MST2. Phosphorylation by LATS2 results in creation of 14-3-3 binding sites, retention in the cytoplasm, and functional inactivation. Phosphorylation results in the inhibition of transcriptional coactivation through YWHAZ-mediated nuclear export. In terms of processing, ubiquitinated at Lys-46; leading to proteasomal degradation. Deubiquitinated and stabilized by UCHL1 at Lys-46; leading to inhibition of osteoclastogenesis. As to expression, highly expressed in kidney, heart, placenta and lung.

The protein resides in the nucleus. It is found in the cytoplasm. Its subcellular location is the cell membrane. The protein localises to the cell junction. It localises to the tight junction. In terms of biological role, transcriptional coactivator which acts as a downstream regulatory target in the Hippo signaling pathway that plays a pivotal role in organ size control and tumor suppression by restricting proliferation and promoting apoptosis. The core of this pathway is composed of a kinase cascade wherein STK3/MST2 and STK4/MST1, in complex with its regulatory protein SAV1, phosphorylates and activates LATS1/2 in complex with its regulatory protein MOB1, which in turn phosphorylates and inactivates YAP1 oncoprotein and WWTR1/TAZ. WWTR1 enhances PAX8 and NKX2-1/TTF1-dependent gene activation. In conjunction with YAP1, involved in the regulation of TGFB1-dependent SMAD2 and SMAD3 nuclear accumulation. Plays a key role in coupling SMADs to the transcriptional machinery such as the mediator complex. Regulates embryonic stem-cell self-renewal, promotes cell proliferation and epithelial-mesenchymal transition. The protein is WW domain-containing transcription regulator protein 1 of Mus musculus (Mouse).